The chain runs to 107 residues: Ig kappa chain V-VI region XRPC 44 (107 aa).

A framework-1 region spans residues 1–23; it reads EIVLTQSPAITAASLGQKVTITC. An intrachain disulfide couples C23 to C87. A complementarity-determining-1 region spans residues 24–33; it reads SASSSVSYMH. The interval 34 to 48 is framework-2; sequence WYQQKSGTSPKPWIY. The interval 49-55 is complementarity-determining-2; it reads EISKLAS. A framework-3 region spans residues 56 to 87; that stretch reads GVPARFSGSGSGTSYSLTISSMEAEDAAIYYC. A complementarity-determining-3 region spans residues 88 to 96; that stretch reads QQWNYPLWT. The tract at residues 97–106 is framework-4; it reads FGGGTKLEIK.

The chain is Ig kappa chain V-VI region XRPC 44 from Mus musculus (Mouse).